A 157-amino-acid polypeptide reads, in one-letter code: Small ribosomal subunit protein uS7 (157 aa).

It belongs to the universal ribosomal protein uS7 family. As to quaternary structure, part of the 30S ribosomal subunit. Contacts proteins S9 and S11.

Functionally, one of the primary rRNA binding proteins, it binds directly to 16S rRNA where it nucleates assembly of the head domain of the 30S subunit. Is located at the subunit interface close to the decoding center, probably blocks exit of the E-site tRNA. This is Small ribosomal subunit protein uS7 from Herpetosiphon aurantiacus (strain ATCC 23779 / DSM 785 / 114-95).